The following is a 509-amino-acid chain: MSVIRALHRQLVTKERSAEEIAREYLERLAQLEPQLKSFITVTEELALQQAKAVDARIRAGEEIGPLAGIPLAVKDNLCTQGIRTTCASRMLEGFIPPYESTVTARLAAAGMVTVGKTNLDEFAMGSSTENSAFQRTANPWDLTRVPGGSSGGSAAAVAADQAVVALGSDTGGSIRQPAAFCGVVGLKPTYGLVSRYGLVAFASSLDQVGPFGRTVEDVALLLQGIAGHDPLDSTSLKVEIPDYSQALIPEIKGFKIGVIRDLLGEGCGEETRAAVQAAIQHLEELGAEILEIDCPSFRYGLATYYIIAPSEASSNLARYDGVKYGLREPADSLLAMYGKTRARGFGPEVKRRIMIGTYALSAGYYDAYYLKAQKVRTLIKQDFLRAFEKVDVLVSPTTPTPAFKAGEREDPLSMYLCDLMTIPVNLAGLPGLSLPCGFANGLPIGLQIIGNVLQESKVLRVAYAYEQSTDWHKRRPPLGQPPLEQAQGTAQQPKAKSKSTKGSKKSKS.

Residues lysine 75 and serine 150 each act as charge relay system in the active site. Serine 174 acts as the Acyl-ester intermediate in catalysis. Residues 471-509 (DWHKRRPPLGQPPLEQAQGTAQQPKAKSKSTKGSKKSKS) form a disordered region. The segment covering 496 to 509 (AKSKSTKGSKKSKS) has biased composition (basic residues).

The protein belongs to the amidase family. GatA subfamily. Heterotrimer of A, B and C subunits.

It catalyses the reaction L-glutamyl-tRNA(Gln) + L-glutamine + ATP + H2O = L-glutaminyl-tRNA(Gln) + L-glutamate + ADP + phosphate + H(+). In terms of biological role, allows the formation of correctly charged Gln-tRNA(Gln) through the transamidation of misacylated Glu-tRNA(Gln) in organisms which lack glutaminyl-tRNA synthetase. The reaction takes place in the presence of glutamine and ATP through an activated gamma-phospho-Glu-tRNA(Gln). The sequence is that of Glutamyl-tRNA(Gln) amidotransferase subunit A from Synechococcus sp. (strain JA-3-3Ab) (Cyanobacteria bacterium Yellowstone A-Prime).